A 474-amino-acid chain; its full sequence is L-arabinose isomerase (474 aa).

Positions 306, 331, 348, and 447 each coordinate Mn(2+).

This sequence belongs to the arabinose isomerase family. Mn(2+) is required as a cofactor.

It carries out the reaction beta-L-arabinopyranose = L-ribulose. Its pathway is carbohydrate degradation; L-arabinose degradation via L-ribulose; D-xylulose 5-phosphate from L-arabinose (bacterial route): step 1/3. Functionally, catalyzes the conversion of L-arabinose to L-ribulose. The sequence is that of L-arabinose isomerase from Lactiplantibacillus plantarum (strain ATCC BAA-793 / NCIMB 8826 / WCFS1) (Lactobacillus plantarum).